The primary structure comprises 233 residues: MSNLSNLRHKLQNGLIASCQPVPGSAMDTPEIVAAMACAALAGGAVGLRIEGISNIRAVRRATDAPIIGIIKRDLPDSEVRITPWLEDIDALSAAGADIIAFDVTCRERPVSVADLYQRARATGCLTMADASNIDDGLLAHHLGIDFIGTTLSGYTQAIVPTEPDLALVTQLAQAGCRVIAEGRYHSPALAAAAISAGAYAVTVGSAITRIEHICGWFCDAIKQCETEKLTEY.

Belongs to the NanE family.

It catalyses the reaction an N-acyl-D-glucosamine 6-phosphate = an N-acyl-D-mannosamine 6-phosphate. It functions in the pathway amino-sugar metabolism; N-acetylneuraminate degradation; D-fructose 6-phosphate from N-acetylneuraminate: step 3/5. Converts N-acetylmannosamine-6-phosphate (ManNAc-6-P) to N-acetylglucosamine-6-phosphate (GlcNAc-6-P). The sequence is that of Putative N-acetylmannosamine-6-phosphate 2-epimerase from Yersinia pseudotuberculosis serotype O:1b (strain IP 31758).